The chain runs to 439 residues: Probable cinnamyl alcohol dehydrogenase 8C (439 aa).

Cys-120 lines the Zn(2+) pocket. Thr-122 is a binding site for NADP(+). Residues His-142, Glu-143, Cys-173, Cys-176, Cys-179, Cys-187, and Cys-239 each contribute to the Zn(2+) site. NADP(+) is bound by residues Thr-243, 264-269, 287-292, Thr-327, Gly-351, and 374-376; these read GLGGLG, STSPGK, and NCV.

The protein belongs to the zinc-containing alcohol dehydrogenase family. Homodimer. The cofactor is Zn(2+).

The enzyme catalyses (E)-cinnamyl alcohol + NADP(+) = (E)-cinnamaldehyde + NADPH + H(+). It carries out the reaction (E)-coniferol + NADP(+) = (E)-coniferaldehyde + NADPH + H(+). It catalyses the reaction (E)-sinapyl alcohol + NADP(+) = (E)-sinapaldehyde + NADPH + H(+). The catalysed reaction is (E)-4-coumaroyl alcohol + NADP(+) = (E)-4-coumaraldehyde + NADPH + H(+). The enzyme catalyses (E)-caffeyl alcohol + NADP(+) = (E)-caffeyl aldehyde + NADPH + H(+). The protein operates within aromatic compound metabolism; phenylpropanoid biosynthesis. Its function is as follows. Involved in lignin biosynthesis. Catalyzes the final step specific for the production of lignin monomers. Catalyzes the NADPH-dependent reduction of coniferaldehyde, 5-hydroxyconiferaldehyde, sinapaldehyde, 4-coumaraldehyde and caffeyl aldehyde to their respective alcohols. This is Probable cinnamyl alcohol dehydrogenase 8C from Oryza sativa subsp. japonica (Rice).